Here is a 132-residue protein sequence, read N- to C-terminus: Large ribosomal subunit protein bL17 (132 aa).

This sequence belongs to the bacterial ribosomal protein bL17 family. As to quaternary structure, part of the 50S ribosomal subunit. Contacts protein L32.

This Ruthia magnifica subsp. Calyptogena magnifica protein is Large ribosomal subunit protein bL17.